Reading from the N-terminus, the 105-residue chain is Small ribosomal subunit protein bS18 (105 aa).

Residues 1 to 10 (MAEETNQQAP) show a composition bias toward polar residues. Residues 1 to 34 (MAEETNQQAPESGASSSQPTSRPSGPRGGSGGRK) form a disordered region. The span at 12-25 (SGASSSQPTSRPSG) shows a compositional bias: low complexity.

Belongs to the bacterial ribosomal protein bS18 family. As to quaternary structure, part of the 30S ribosomal subunit. Forms a tight heterodimer with protein bS6.

Functionally, binds as a heterodimer with protein bS6 to the central domain of the 16S rRNA, where it helps stabilize the platform of the 30S subunit. The sequence is that of Small ribosomal subunit protein bS18 from Acidobacterium capsulatum (strain ATCC 51196 / DSM 11244 / BCRC 80197 / JCM 7670 / NBRC 15755 / NCIMB 13165 / 161).